The sequence spans 64 residues: Gallinacin-2 (64 aa).

The first 22 residues, 1-22, serve as a signal peptide directing secretion; sequence MRILYLLFSLLFLALQVSPGLS. Positions 23-28 are excised as a propeptide; the sequence is SPRRDM. Disulfide bonds link Cys31-Cys57, Cys36-Cys51, and Cys41-Cys58.

Expressed in circulating heterophil granulocytes and bone marrow (at protein level). Strong expression in the bone marrow, lung and testis. Moderate expression in the bursa and intestine. Low expression in the cloaca, gall bladder, brain, pancreas, trachea, air sacs and spleen. Expressed in the vagina, ovarian stroma and the theca layer of the ovarian follicle, but not in the granulosa layer of the ovarian follicle.

The protein resides in the secreted. It is found in the cytoplasmic granule. Potent antibacterial activity against the Gram-negative bacterium E.coli ML-35, and against the Gram-positive bacterium L.monocytogenes EGD. Lacks antifungal activity against C.albicans. The chain is Gallinacin-2 (GAL2) from Gallus gallus (Chicken).